Reading from the N-terminus, the 616-residue chain is D-glucuronyl C5-epimerase (616 aa).

The Cytoplasmic segment spans residues 1-12 (MKCLRWRSNRHR). The helical; Signal-anchor for type II membrane protein transmembrane segment at 13 to 29 (IYLLVACGALFLLNRHL) threads the bilayer. Topologically, residues 30–616 (TQEESRIDEE…YAYGKRAKHN (587 aa)) are extracellular. Substrate-binding positions include Tyr136, 141-143 (RDR), and Gln169. N-linked (GlcNAc...) asparagine glycans are attached at residues Asn188, Asn232, Asn267, and Asn471. Substrate-binding positions include Tyr504, Arg562, and 574–580 (RWDYHAV).

It belongs to the D-glucuronyl C5-epimerase family. Homodimer. Expression in comma stage embryos is strong in the hypodermis and intestine and weaker in the head region. In late embryos, larval, and adult stages, expressed primarily in hypodermis and intestine.

It is found in the cell membrane. Its subcellular location is the secreted. It localises to the extracellular space. The protein localises to the extracellular matrix. The protein resides in the basement membrane. The catalysed reaction is [heparosan-N-sulfate](n) = [heparan-N-sulfate](n). It participates in glycan metabolism; heparan sulfate biosynthesis. It functions in the pathway glycan metabolism; heparin biosynthesis. In terms of biological role, converts D-glucuronic acid residues adjacent to N-sulfate sugar residues to L-iduronic acids. Plays a role in the early migration of AQR and PQR neurons, which descend from the Q neuroblasts. The polypeptide is D-glucuronyl C5-epimerase (hse-5) (Caenorhabditis elegans).